The chain runs to 439 residues: MLRFAPSPTGDMHIGNLRAAIFNYIVAKQQHKPFLIRIEDTDKERNIEGKDQEILEILKLMGISWDKLVYQSRNIDYHREMAEKLLKENKAFYCYASTEFLEREKEKAKNEKRPFRYLDEWAALEKDKHHAPVVRLKAPNHAVSFNDAIKKEVEFEPYELDSFVLLRKDKSPTYNFACACDDLLYEISLIIRGEDHVSNTPKQILIQQALGSNNPIVYAHLPIILDETSGKKMSKRDEVSSVKWLLNQGFLPEAIVNYLITIGNKVPKEVFSLDEAIEWFDLENLSSSPAHFNLKYLKHLNHEHLKLLDDEKLLELILIKDKNLLGLLRLFIEECGTLLELKEKISLFLEPKDIVKTYENEDFKERCLVLFNALKSMDFQAYKDFESFKKEAMRLSQLKGKDFFKPLRILLTGNSHGVELPLIFPYIQSHHQKVLRLKA.

A 'HIGH' region motif is present at residues 6 to 16 (PSPTGDMHIGN). Residues 232-236 (KMSKR) carry the 'KMSKS' region motif. Lysine 235 is an ATP binding site.

It belongs to the class-I aminoacyl-tRNA synthetase family. Glutamate--tRNA ligase type 1 subfamily. Monomer.

Its subcellular location is the cytoplasm. The enzyme catalyses tRNA(Glu) + L-glutamate + ATP = L-glutamyl-tRNA(Glu) + AMP + diphosphate. In terms of biological role, catalyzes the attachment of glutamate to tRNA(Glu) in a two-step reaction: glutamate is first activated by ATP to form Glu-AMP and then transferred to the acceptor end of tRNA(Glu). In Helicobacter pylori (strain Shi470), this protein is Glutamate--tRNA ligase 2.